Here is a 423-residue protein sequence, read N- to C-terminus: MGSIIVERSKLSGEVEISGAKNSALPLLAAALLTEEEVTLYKVPVLSDVETMIDILRTTGKDVFFDKHKGIVKISGKISITHIQYELVRKMRASFNVLGPIAALVGEASTPLPGGCAIGARPVDFHLEGLKKIGFEISFDHGEIRAKRGKKEEESVVYLPFPSVGATEHIMSTAAILPGKTIIENAAMEPEIIDLQNLLNKMGAKVYGAGTSKIIVEGVEKLHGCEHTIIPDRIEAGTYIIGILATKGEGIVKNIIPEHLEALWFVLEKTGAIIKKGENEVEVKSPDKWYGCDINVLPYPGFPTDLQPQILVYLSLADGSSTVTENVFKTRFAHVAELVRMGANMKIIENTVFINGVEKLYGTTVMGTDLRATAALVIAGLAAEDRTEVTSVEHIFRGYENVIEKFSKLGASIKYIPGGVPEI.

21 to 22 contacts phosphoenolpyruvate; sequence KN. Arg92 contacts UDP-N-acetyl-alpha-D-glucosamine. The active-site Proton donor is the Cys116. Cys116 is modified (2-(S-cysteinyl)pyruvic acid O-phosphothioketal). Residues Asp305 and Val327 each coordinate UDP-N-acetyl-alpha-D-glucosamine.

This sequence belongs to the EPSP synthase family. MurA subfamily.

Its subcellular location is the cytoplasm. It catalyses the reaction phosphoenolpyruvate + UDP-N-acetyl-alpha-D-glucosamine = UDP-N-acetyl-3-O-(1-carboxyvinyl)-alpha-D-glucosamine + phosphate. It participates in cell wall biogenesis; peptidoglycan biosynthesis. In terms of biological role, cell wall formation. Adds enolpyruvyl to UDP-N-acetylglucosamine. The chain is UDP-N-acetylglucosamine 1-carboxyvinyltransferase from Fervidobacterium nodosum (strain ATCC 35602 / DSM 5306 / Rt17-B1).